Consider the following 413-residue polypeptide: Variant surface glycoprotein YnAT 1.3 (413 aa).

The N-terminal stretch at 1–22 (MLDNSRARSIVHLLILLKAHVI) is a signal peptide. N-linked (GlcNAc...) asparagine glycans are attached at residues Asn-91, Asn-361, and Asn-379. Asn-379 carries GPI-anchor amidated asparagine lipidation. The propeptide at 380–413 (SSNPTSRQNSVVQEPTTVSAAAITPLILPWTLLI) is removed in mature form.

It is found in the cell membrane. In terms of biological role, VSG forms a coat on the surface of the parasite. The trypanosome evades the immune response of the host by expressing a series of antigenically distinct VSGs from an estimated 1000 VSG genes. In Trypanosoma congolense, this protein is Variant surface glycoprotein YnAT 1.3.